The chain runs to 302 residues: Sulfate adenylyltransferase subunit 2 (302 aa).

The protein belongs to the PAPS reductase family. CysD subfamily. As to quaternary structure, heterodimer composed of CysD, the smaller subunit, and CysN.

It carries out the reaction sulfate + ATP + H(+) = adenosine 5'-phosphosulfate + diphosphate. The protein operates within sulfur metabolism; hydrogen sulfide biosynthesis; sulfite from sulfate: step 1/3. In terms of biological role, with CysN forms the ATP sulfurylase (ATPS) that catalyzes the adenylation of sulfate producing adenosine 5'-phosphosulfate (APS) and diphosphate, the first enzymatic step in sulfur assimilation pathway. APS synthesis involves the formation of a high-energy phosphoric-sulfuric acid anhydride bond driven by GTP hydrolysis by CysN coupled to ATP hydrolysis by CysD. In Citrobacter koseri (strain ATCC BAA-895 / CDC 4225-83 / SGSC4696), this protein is Sulfate adenylyltransferase subunit 2.